The chain runs to 406 residues: Imidazolonepropionase (406 aa).

His74 and His76 together coordinate Fe(3+). Zn(2+) contacts are provided by His74 and His76. 4-imidazolone-5-propanoate is bound by residues Arg83, Tyr146, and His179. N-formimidoyl-L-glutamate is bound at residue Tyr146. His240 contacts Fe(3+). Position 240 (His240) interacts with Zn(2+). Glu243 lines the 4-imidazolone-5-propanoate pocket. Asp314 is a Fe(3+) binding site. Position 314 (Asp314) interacts with Zn(2+). Residues Asn316 and Gly318 each coordinate N-formimidoyl-L-glutamate. Ser319 is a 4-imidazolone-5-propanoate binding site.

It belongs to the metallo-dependent hydrolases superfamily. HutI family. Zn(2+) serves as cofactor. The cofactor is Fe(3+).

It is found in the cytoplasm. The catalysed reaction is 4-imidazolone-5-propanoate + H2O = N-formimidoyl-L-glutamate. It participates in amino-acid degradation; L-histidine degradation into L-glutamate; N-formimidoyl-L-glutamate from L-histidine: step 3/3. In terms of biological role, catalyzes the hydrolytic cleavage of the carbon-nitrogen bond in imidazolone-5-propanoate to yield N-formimidoyl-L-glutamate. It is the third step in the universal histidine degradation pathway. This Kosmotoga olearia (strain ATCC BAA-1733 / DSM 21960 / TBF 19.5.1) protein is Imidazolonepropionase.